The sequence spans 399 residues: Phosphoglycerate kinase (399 aa).

Residues 21–23 (DFN), Arg36, 59–62 (HLGR), Arg120, and Arg158 contribute to the substrate site. Residues Lys209, Gly297, Glu328, and 355–358 (GGDS) each bind ATP.

This sequence belongs to the phosphoglycerate kinase family. As to quaternary structure, monomer.

It localises to the cytoplasm. The enzyme catalyses (2R)-3-phosphoglycerate + ATP = (2R)-3-phospho-glyceroyl phosphate + ADP. It participates in carbohydrate degradation; glycolysis; pyruvate from D-glyceraldehyde 3-phosphate: step 2/5. The chain is Phosphoglycerate kinase from Streptococcus thermophilus (strain CNRZ 1066).